The chain runs to 431 residues: Ribosome assembly protein SQT1 (431 aa).

6 WD repeats span residues 63–102 (KHTDSVFAIGHHPNLPLVCTGGGDNLAHLWTSHSQPPKFA), 107–146 (GYGESVISCSFTSEGGFLVTADMSGKVLVHMGQKGGAQWK), 149–192 (SQMQ…GSLE), 199–243 (VHQQ…QLFK), 309–348 (ELDASIESISWSSKFSLMAIGLVCGEILLYDTSAWRVRHK), and 350–387 (VLEDSVTKLMFDNDDLFASCINGKVYQFNARTGQEKFV).

In terms of assembly, interacts strongly with QSR1. Part of an oligomeric protein complex that is loosely associated with ribosomes.

Functionally, may be involved in the late step of 60S ribosomal subunit assembly or modification in the cytoplasm. The protein is Ribosome assembly protein SQT1 (SQT1) of Saccharomyces cerevisiae (strain ATCC 204508 / S288c) (Baker's yeast).